Here is a 38-residue protein sequence, read N- to C-terminus: Photosystem II reaction center protein L (38 aa).

The helical transmembrane segment at serine 17 to phenylalanine 37 threads the bilayer.

This sequence belongs to the PsbL family. As to quaternary structure, PSII is composed of 1 copy each of membrane proteins PsbA, PsbB, PsbC, PsbD, PsbE, PsbF, PsbH, PsbI, PsbJ, PsbK, PsbL, PsbM, PsbT, PsbY, PsbZ, Psb30/Ycf12, at least 3 peripheral proteins of the oxygen-evolving complex and a large number of cofactors. It forms dimeric complexes.

The protein resides in the plastid. It is found in the chloroplast thylakoid membrane. In terms of biological role, one of the components of the core complex of photosystem II (PSII). PSII is a light-driven water:plastoquinone oxidoreductase that uses light energy to abstract electrons from H(2)O, generating O(2) and a proton gradient subsequently used for ATP formation. It consists of a core antenna complex that captures photons, and an electron transfer chain that converts photonic excitation into a charge separation. This subunit is found at the monomer-monomer interface and is required for correct PSII assembly and/or dimerization. The polypeptide is Photosystem II reaction center protein L (Bigelowiella natans (Pedinomonas minutissima)).